A 309-amino-acid polypeptide reads, in one-letter code: MKITILSGGTGTPKLIQGFKEILPNEDISVIVNTGEDTYIGDIYLSPDIDTVLYTFSDLINDETWYGLKGDTFFCHEQLKNFGFDEVLKIGDKDRALKMHKASSLKNGVKMSEIVDIERKSLLINSKIYPMSNEKVESKVLIEENNEKILLKFHDFWIFRKGNAKVLDIFYENSNYAKAANGVLKAIHESDFVLIGPSNPITSIGPILSISEIKNALKEKLVFAVSPIVGENPVSGPAGTLMNAKGYPVSAVGVYEYYKDIVDVLVLDNSDINKKKDINCEVLYANTIMKTIDDKINLARNILDYYKSR.

The 7,8-didemethyl-8-hydroxy-5-deazariboflavin site is built by Asp50 and Lys89.

It belongs to the CofD family. Homodimer. It depends on Mg(2+) as a cofactor.

It carries out the reaction (2S)-lactyl-2-diphospho-5'-guanosine + 7,8-didemethyl-8-hydroxy-5-deazariboflavin = oxidized coenzyme F420-0 + GMP + H(+). It functions in the pathway cofactor biosynthesis; coenzyme F420 biosynthesis. Functionally, catalyzes the transfer of the 2-phospholactate moiety from (2S)-lactyl-2-diphospho-5'-guanosine to 7,8-didemethyl-8-hydroxy-5-deazariboflavin (FO) with the formation of oxidized coenzyme F420-0 and GMP. The polypeptide is 2-phospho-L-lactate transferase (Methanococcus maripaludis (strain C7 / ATCC BAA-1331)).